The chain runs to 419 residues: Dual specificity mitogen-activated protein kinase kinase 7 (419 aa).

A2 is modified (N-acetylalanine). Residues 2–30 are a coiled coil; the sequence is AASSLEQKLSRLEAKLKQENREARRRIDL. Residues 18–30 are compositionally biased toward basic and acidic residues; sequence KQENREARRRIDL. Residues 18-76 form a disordered region; sequence KQENREARRRIDLNLDISPQRPRPTLQLPLANDGGSRSPSSESSPQHPTPPARPRHMLG. Low complexity predominate over residues 36–63; that stretch reads PQRPRPTLQLPLANDGGSRSPSSESSPQ. The segment at 37–57 is d domain; it reads QRPRPTLQLPLANDGGSRSPS. A Protein kinase domain is found at 120–380; it reads LENLGEMGSG…YNKLLEHSFI (261 aa). ATP contacts are provided by residues 126–134 and K149; that span reads MGSGTCGQV. Catalysis depends on D243, which acts as the Proton acceptor. S271 carries the phosphoserine; by MAP3K modification. Residue T275 is modified to Phosphothreonine; by MAP3K. A DVD domain region spans residues 377-400; sequence HSFIKRYETLEVDVASWFKDVMAK. A Phosphoserine modification is found at S411.

The protein belongs to the protein kinase superfamily. STE Ser/Thr protein kinase family. MAP kinase kinase subfamily. Interacts with isoform 1 of VRK2. Interacts (via its D domain) with its substrates MAPK8/JNK1, MAPK9/JNK2 and MAPK10/JNK3. Interacts (via its DVD domain) with MAP3Ks activators like MAP3K5/ASK1 and MAP3K1/MEKK1. Interacts with MAPK8IP1/JIP1, MAPK8IP2/JIP2 and MAPK8IP3/JIP3 scaffold proteins. Interacts with RASSF7, the interaction promotes phosphorylation. Found in a complex with SH3RF1, RAC1, MAP3K11/MLK3, MAPK8IP1/JIP1 and MAPK8/JNK1. Found in a complex with SH3RF1, RAC2, MAP3K7/TAK1, MAPK8IP1/JIP1, MAPK8/JNK1 and MAPK9/JNK2. Requires Mg(2+) as cofactor. Activated by phosphorylation on Ser-271 and Thr-275 by MAP kinase kinase kinases (MAP3Ks). Ubiquitous; with highest level of expression in skeletal muscle. Isoform 3 is found at low levels in placenta, fetal liver, and skeletal muscle.

The protein resides in the nucleus. Its subcellular location is the cytoplasm. The enzyme catalyses L-seryl-[protein] + ATP = O-phospho-L-seryl-[protein] + ADP + H(+). It catalyses the reaction L-threonyl-[protein] + ATP = O-phospho-L-threonyl-[protein] + ADP + H(+). The catalysed reaction is L-tyrosyl-[protein] + ATP = O-phospho-L-tyrosyl-[protein] + ADP + H(+). Activated by phosphorylation by specific MAP kinase kinase kinases such as MAP3K1/MEKK1, MAP3K3/MEKK3, MAP3K11/MLK3 and MAP3K12/DLK. In terms of biological role, dual specificity protein kinase which acts as an essential component of the MAP kinase signal transduction pathway. Essential component of the stress-activated protein kinase/c-Jun N-terminal kinase (SAP/JNK) signaling pathway. With MAP2K4/MKK4, is the one of the only known kinase to directly activate the stress-activated protein kinase/c-Jun N-terminal kinases MAPK8/JNK1, MAPK9/JNK2 and MAPK10/JNK3. MAP2K4/MKK4 and MAP2K7/MKK7 both activate the JNKs by phosphorylation, but they differ in their preference for the phosphorylation site in the Thr-Pro-Tyr motif. MAP2K4/MKK4 shows preference for phosphorylation of the Tyr residue and MAP2K7/MKK7 for the Thr residue. The monophosphorylation of JNKs on the Thr residue is sufficient to increase JNK activity indicating that MAP2K7/MKK7 is important to trigger JNK activity, while the additional phosphorylation of the Tyr residue by MAP2K4/MKK4 ensures optimal JNK activation. Has a specific role in JNK signal transduction pathway activated by pro-inflammatory cytokines. The MKK/JNK signaling pathway is also involved in mitochondrial death signaling pathway, including the release cytochrome c, leading to apoptosis. Part of a non-canonical MAPK signaling pathway, composed of the upstream MAP3K12 kinase and downstream MAP kinases MAPK1/ERK2 and MAPK3/ERK1, that enhances the AP-1-mediated transcription of APP in response to APOE. In Homo sapiens (Human), this protein is Dual specificity mitogen-activated protein kinase kinase 7 (MAP2K7).